The primary structure comprises 140 residues: Small ribosomal subunit protein bS16 (140 aa).

Residues 86 to 140 (TVGKAKQAAKREEEAKQAAKEAAEAKAAAEAEAAAAAEAAKAEDAPDGETESSEG) are disordered. The segment covering 94 to 114 (AKREEEAKQAAKEAAEAKAAA) has biased composition (basic and acidic residues). Residues 115–124 (EAEAAAAAEA) are compositionally biased toward low complexity. Residues 130-140 (APDGETESSEG) show a composition bias toward acidic residues.

The protein belongs to the bacterial ribosomal protein bS16 family.

The polypeptide is Small ribosomal subunit protein bS16 (Parasynechococcus marenigrum (strain WH8102)).